A 192-amino-acid polypeptide reads, in one-letter code: Fe/S biogenesis protein NfuA (192 aa).

Residues cysteine 149 and cysteine 152 each coordinate [4Fe-4S] cluster.

Belongs to the NfuA family. Homodimer. It depends on [4Fe-4S] cluster as a cofactor.

Involved in iron-sulfur cluster biogenesis. Binds a 4Fe-4S cluster, can transfer this cluster to apoproteins, and thereby intervenes in the maturation of Fe/S proteins. Could also act as a scaffold/chaperone for damaged Fe/S proteins. This is Fe/S biogenesis protein NfuA from Aeromonas salmonicida (strain A449).